The primary structure comprises 431 residues: Enolase (431 aa).

Q166 lines the (2R)-2-phosphoglycerate pocket. The Proton donor role is filled by E208. D245, E288, and D315 together coordinate Mg(2+). 4 residues coordinate (2R)-2-phosphoglycerate: K340, R369, S370, and K391. The active-site Proton acceptor is K340.

The protein belongs to the enolase family. The cofactor is Mg(2+).

It localises to the cytoplasm. The protein localises to the secreted. It is found in the cell surface. The enzyme catalyses (2R)-2-phosphoglycerate = phosphoenolpyruvate + H2O. It functions in the pathway carbohydrate degradation; glycolysis; pyruvate from D-glyceraldehyde 3-phosphate: step 4/5. In terms of biological role, catalyzes the reversible conversion of 2-phosphoglycerate (2-PG) into phosphoenolpyruvate (PEP). It is essential for the degradation of carbohydrates via glycolysis. In Clostridium botulinum (strain Eklund 17B / Type B), this protein is Enolase.